The primary structure comprises 344 residues: L-rhamnose-proton symporter (344 aa).

Transmembrane regions (helical) follow at residues 4-24 (AITMGIFWHLIGAASAACFYA), 38-58 (WSVGGIVSWIILPWAISALLL), 68-88 (FSLSTLLPVFLFGAMWGIGNI), 101-121 (MGIGIAIGITLIVGTLMTPII), 137-157 (TLLGVLVALIGVGIVTRAGQL), 175-195 (LVLAVMCGIFSAGMSFAMNAA), 214-234 (LPSYVVIMGGGAIINLGFCFI), 259-279 (VLLSTLGGLMWYLQFFFYAWG), 290-310 (ISWMLHMSFYVLCGGIVGLVL), and 323-343 (VLSLGCVVIIVAANIVGIGMA).

It belongs to the L-rhamnose transporter (TC 2.A.7.6) family.

The protein resides in the cell inner membrane. It carries out the reaction L-rhamnopyranose(in) + H(+)(in) = L-rhamnopyranose(out) + H(+)(out). Uptake of L-rhamnose across the cytoplasmic membrane with the concomitant transport of protons into the cell (symport system). This Escherichia coli (strain ATCC 8739 / DSM 1576 / NBRC 3972 / NCIMB 8545 / WDCM 00012 / Crooks) protein is L-rhamnose-proton symporter.